Consider the following 279-residue polypeptide: NH(3)-dependent NAD(+) synthetase (279 aa).

46–53 contributes to the ATP binding site; the sequence is GISGGQDS. Asp-52 contributes to the Mg(2+) binding site. Residue Arg-145 coordinates deamido-NAD(+). Thr-165 is an ATP binding site. Glu-170 contacts Mg(2+). 2 residues coordinate deamido-NAD(+): Lys-178 and Asp-185. ATP contacts are provided by Lys-194 and Thr-216. 265–266 provides a ligand contact to deamido-NAD(+); the sequence is HK.

It belongs to the NAD synthetase family. As to quaternary structure, homodimer.

The enzyme catalyses deamido-NAD(+) + NH4(+) + ATP = AMP + diphosphate + NAD(+) + H(+). The protein operates within cofactor biosynthesis; NAD(+) biosynthesis; NAD(+) from deamido-NAD(+) (ammonia route): step 1/1. Catalyzes the ATP-dependent amidation of deamido-NAD to form NAD. Uses ammonia as a nitrogen source. This Rhodococcus opacus (strain B4) protein is NH(3)-dependent NAD(+) synthetase.